The following is a 482-amino-acid chain: uncharacterized protein (482 aa).

Helical transmembrane passes span 40-57 (LDWYLMPMFSVLYFLSFL), 83-103 (AAVSVFYATYITAETPSVLLV), 109-129 (HYYLSAMIIGWSLVTIFTCFV), 140-160 (LLLGICEGGFFPCLSLYISMT), 170-190 (LAYLYVCSCFSGAFGGLIATG), 205-225 (WLYIIEGLISAISALWILFCL), 278-298 (VIQFCQDLVLYGISTFLPSIL), 311-331 (YMSVPVYALGGISVYVICLLS), 338-358 (GWFIIGMNFFGLAGFIILLAT), 366-386 (VATYLIALPLYPTVALNITWI), 399-418 (ALGCNQTIGNLAGVIAGQVY), and 428-448 (GFALGCTVVGTLTATAMRFYL).

It belongs to the major facilitator superfamily. Allantoate permease family.

The protein localises to the endoplasmic reticulum. It is found in the membrane. This is an uncharacterized protein from Schizosaccharomyces pombe (strain 972 / ATCC 24843) (Fission yeast).